Consider the following 1647-residue polypeptide: Putative RNA exonuclease pqe-1 (1647 aa).

4 disordered regions span residues 1 to 199 (MFNG…QVQN), 274 to 393 (QTPA…TSLP), 515 to 619 (MMQQ…KPVI), and 641 to 665 (QVKQEIPEVSSTSDATKSDAAPTAR). Composition is skewed to low complexity over residues 30–64 (GPSQNAQQQQQQASAPGTSSGGPSQAVSGASSGAS) and 99–131 (TQPQQRQQQQSQPQARQMSTQQAANLRKNAAAA). Positions 143–170 (SREQGNAHQPTAGQIPQSSNQPAQQTHN) are enriched in polar residues. Low complexity-rich tracts occupy residues 274 to 297 (QTPARGRPANAQLAQNAQQRNPQQ) and 515 to 526 (MMQQQAMQMQMQ). Positions 527–540 (NPPPVHQQPPPQQP) are enriched in pro residues. The span at 541-555 (PQQQRQKQQRSQPAP) shows a compositional bias: low complexity. Over residues 592–601 (SKIEPVDVKP) the composition is skewed to basic and acidic residues. Residues 650 to 664 (SSTSDATKSDAAPTA) show a composition bias toward low complexity. Residues 686–726 (SAKKFERMKAEAEDKEDMKKKIAALQEALFNIQEERRVEKE) adopt a coiled-coil conformation. Positions 736–756 (AVPQNQPASSVQIAQVSTSES) are enriched in polar residues. Residues 736-1174 (AVPQNQPASS…LRNKKHTTEE (439 aa)) form a disordered region. Residues 761-772 (TSEAAATETMTS) are compositionally biased toward low complexity. The span at 783 to 793 (TEGEQEEDEDE) shows a compositional bias: acidic residues. The segment covering 822-833 (RSDEKREKRHVS) has biased composition (basic and acidic residues). Over residues 878 to 905 (DNEDDDADSFVVGDDEPIEYEEEDEDDM) the composition is skewed to acidic residues. Residues 977–992 (TPTASSSMSSSTLSYC) are compositionally biased toward low complexity. Residues 1018-1031 (KTREENRERKRLAQ) show a composition bias toward basic and acidic residues. The span at 1038–1054 (SETTGVRRTLRSTQDNS) shows a compositional bias: polar residues. Basic and acidic residues-rich tracts occupy residues 1076-1088 (AKSSENRAKEKQK) and 1139-1174 (NHTEMLDKRNKESEEKRRKDRDELERLRNKKHTTEE). A coiled-coil region spans residues 1142–1187 (EMLDKRNKESEEKRRKDRDELERLRNKKHTTEEEKIKMARLQNALK). Residues 1477-1637 (RVYALDCEMV…IFYGLRNPES (161 aa)) enclose the Exonuclease domain.

This sequence belongs to the REXO1/REXO3 family. As to expression, expressed in the excretory canal, vulval cells, the intestine and in head and tail neurons including ASH, RIC and AIZ neurons.

Its subcellular location is the nucleus. Functionally, putative RNA exonuclease which protects neurons from the toxic effects of expanded poly-Q disease proteins. It is unknown whether this is via participation in the pathogenic mechanism underlying poly-Q-induced neurodegeneration or if it is by acting as a genetic modifier of the age of onset or progression of neurodegeneration. Regulates gene expression in neurons. This is Putative RNA exonuclease pqe-1 from Caenorhabditis elegans.